The sequence spans 358 residues: Small ribosomal subunit biogenesis GTPase RsgA 2 (358 aa).

Positions 106–261 (AEQLIAANVD…LIDTPGMREI (156 aa)) constitute a CP-type G domain. Residues 151-154 (SKAD) and 203-211 (GSSGVGKST) each bind GTP. Positions 284, 289, 291, and 297 each coordinate Zn(2+).

The protein belongs to the TRAFAC class YlqF/YawG GTPase family. RsgA subfamily. In terms of assembly, monomer. Associates with 30S ribosomal subunit, binds 16S rRNA. Requires Zn(2+) as cofactor.

It localises to the cytoplasm. One of several proteins that assist in the late maturation steps of the functional core of the 30S ribosomal subunit. Helps release RbfA from mature subunits. May play a role in the assembly of ribosomal proteins into the subunit. Circularly permuted GTPase that catalyzes slow GTP hydrolysis, GTPase activity is stimulated by the 30S ribosomal subunit. The polypeptide is Small ribosomal subunit biogenesis GTPase RsgA 2 (Vibrio parahaemolyticus serotype O3:K6 (strain RIMD 2210633)).